The chain runs to 272 residues: Ethanolamine ammonia-lyase small subunit (272 aa).

Val-161, Glu-182, and Cys-211 together coordinate adenosylcob(III)alamin.

Belongs to the EutC family. As to quaternary structure, the basic unit is a heterodimer which dimerizes to form tetramers. The heterotetramers trimerize; 6 large subunits form a core ring with 6 small subunits projecting outwards. Adenosylcob(III)alamin serves as cofactor.

It localises to the bacterial microcompartment. It catalyses the reaction ethanolamine = acetaldehyde + NH4(+). It functions in the pathway amine and polyamine degradation; ethanolamine degradation. In terms of biological role, catalyzes the deamination of various vicinal amino-alcohols to oxo compounds. Allows this organism to utilize ethanolamine as the sole source of nitrogen and carbon in the presence of external vitamin B12. This chain is Ethanolamine ammonia-lyase small subunit, found in Pseudomonas putida (strain ATCC 700007 / DSM 6899 / JCM 31910 / BCRC 17059 / LMG 24140 / F1).